Here is a 112-residue protein sequence, read N- to C-terminus: Thyroid transcription factor 1 (112 aa).

Positions 1–60 form a DNA-binding region, homeobox; the sequence is RRNRRVLFSQAQVYELERRFKQQKYLSAPEREHLASMIHLTPTQVKIWFQNHRYKMKRQA. Positions 59 to 100 are disordered; sequence QAKDKAAQQQLQQDSGGGGGGGGAGCPQQQQAQQQSPRRVAV. A compositionally biased stretch (gly residues) spans 73–83; the sequence is SGGGGGGGGAG. The span at 84–93 shows a compositional bias: low complexity; the sequence is CPQQQQAQQQ.

It belongs to the NK-2 homeobox family. Phosphorylated on serine residues.

It is found in the nucleus. In terms of biological role, transcription factor that binds and activates the promoter of thyroid specific genes such as thyroglobulin, thyroperoxidase, and thyrotropin receptor. Crucial in the maintenance of the thyroid differentiation phenotype. May play a role in lung development and surfactant homeostasis. This chain is Thyroid transcription factor 1 (TITF1), found in Cavia porcellus (Guinea pig).